Consider the following 354-residue polypeptide: MGNKTSRKSKEKSGRNYTTELRSYEAACKEDMEIQSFDTRMQARTSHVISTLATGVEVRSLSFDSLKAVIGSLLDMNQEVAKVILDCKKDIWKNQEMFEFVEAYFETSLKTLDFFNALKRGLQGVQINHLFILDGNGYKKTLQELKRFKDADRPFDQDFFKMFQSVYNQQKWMLDKLQRRQNKLDKKLKRIRTWRKLSSIIFMATFATLVICSVLAATMAAPHVAAALAAATPPVGSMGKWIDSLWKNYENEIKGQTEVFSSMYVGTYVAVQDLNNIKDLIKRLDTEIRGMVKNAEYAGELGPVKIGINAIKTQLEVFKKNVEELEIQADMCSTDIRRARTVILQRIINATCST.

2 helical membrane-spanning segments follow: residues 200-220 (IIFM…ATMA) and 222-242 (PHVA…GKWI). Residues 270-341 (AVQDLNNIKD…CSTDIRRART (72 aa)) adopt a coiled-coil conformation.

Belongs to the UPF0496 family.

Its subcellular location is the membrane. In Arabidopsis thaliana (Mouse-ear cress), this protein is UPF0496 protein At4g34330.